A 256-amino-acid chain; its full sequence is tRNA (guanine-N(7)-)-methyltransferase (256 aa).

Positions 1–15 (MVATGGQAQDQSHNQ) are enriched in polar residues. The segment at 1–22 (MVATGGQAQDQSHNQEPGVLCP) is disordered. S-adenosyl-L-methionine is bound by residues glycine 79, 102–103 (EI), 137–138 (NA), and leucine 157. The active site involves aspartate 160. 235-237 (SEE) is an S-adenosyl-L-methionine binding site.

The protein belongs to the class I-like SAM-binding methyltransferase superfamily. TrmB family.

It is found in the nucleus. The enzyme catalyses guanosine(46) in tRNA + S-adenosyl-L-methionine = N(7)-methylguanosine(46) in tRNA + S-adenosyl-L-homocysteine. It functions in the pathway tRNA modification; N(7)-methylguanine-tRNA biosynthesis. In terms of biological role, catalyzes the formation of N(7)-methylguanine at position 46 (m7G46) in tRNA. This Drosophila yakuba (Fruit fly) protein is tRNA (guanine-N(7)-)-methyltransferase.